Here is a 583-residue protein sequence, read N- to C-terminus: AP-1-like transcription factor YAP1 (583 aa).

A disordered region spans residues 1 to 86 (MSTSTAKRPF…KELEDKVSQL (86 aa)). A compositionally biased stretch (basic and acidic residues) spans 8–17 (RPFDNKRAGS). Positions 24-36 (SDSGGNNSGSSPA) are enriched in low complexity. Residues 37 to 46 (SKRRERKPGR) are compositionally biased toward basic residues. The Bipartite nuclear localization signal signature appears at 41–48 (ERKPGRKP). Basic and acidic residues-rich tracts occupy residues 47–58 (KPLETEAKDKRT) and 67–84 (AFRERRERKMKELEDKVS). The bZIP domain occupies 51-114 (TEAKDKRTAQ…TNLLSELKRY (64 aa)). The segment at 54 to 77 (KDKRTAQNRAAQRAFRERRERKMK) is basic motif. The tract at residues 79-86 (LEDKVSQL) is leucine-zipper. A Bipartite nuclear localization signal motif is present at residues 120–127 (KKRDSILL). The segment covering 177–195 (SKIPSPSSDSTSPSASTSI) has biased composition (low complexity). A disordered region spans residues 177–233 (SKIPSPSSDSTSPSASTSILDNANNKSVSSTNLNHSRSSISNSSSSPSNVNGLSSRK). Positions 196 to 207 (LDNANNKSVSST) are enriched in polar residues. The span at 208–230 (NLNHSRSSISNSSSSPSNVNGLS) shows a compositional bias: low complexity. The n-CRD stretch occupies residues 265-272 (CSKLSMAC). Intrachain disulfides connect cysteine 265–cysteine 531 and cysteine 272–cysteine 562. Disordered stretches follow at residues 275–329 (KSNP…SASA) and 350–373 (QYNDSSHSQATPNGLDNDSSVSAW). A compositionally biased stretch (low complexity) spans 297 to 312 (KSNSNVNITNHNNNKI). A compositionally biased stretch (polar residues) spans 316-329 (DLSSSAPLHDSASA). The interval 531 to 562 (CSEVWDRITAHPRYSDLDIDGLCLELRTKAKC) is c-CRD. The short motif at 547-554 (LDIDGLCL) is the Nuclear export signal element.

This sequence belongs to the bZIP family. YAP subfamily. Oxidative stress induces conformational changes through oxidation of cysteine residues, masking the nuclear export signal, thus abolishing nuclear export by CRM1/exportin 1.

The protein localises to the nucleus. It localises to the cytoplasm. In terms of biological role, transcription activator involved in oxidative stress response and cadmium resistance. Regulates the transcription of genes encoding antioxidant enzymes and components of the cellular thiol-reducing pathways. Activity of the transcription factor is controlled through oxidation of specific cysteine residues resulting in the alteration of its subcellular location. Activation by alkyl hydroperoxides or cadmium induces nuclear accumulation and as a result YAP1 transcriptional activity. This chain is AP-1-like transcription factor YAP1 (YAP1), found in Kluyveromyces lactis (strain ATCC 8585 / CBS 2359 / DSM 70799 / NBRC 1267 / NRRL Y-1140 / WM37) (Yeast).